We begin with the raw amino-acid sequence, 346 residues long: Acetylserotonin O-methyltransferase (346 aa).

Residues Tyr148, Trp165, Asp211, 236–238 (GDF), and Lys253 contribute to the S-adenosyl-L-methionine site. Catalysis depends on His256, which acts as the Proton donor/acceptor. 3 residues coordinate substrate: Asp257, Asn303, and Gln307.

Belongs to the class I-like SAM-binding methyltransferase superfamily. Cation-independent O-methyltransferase family. In terms of assembly, homodimer. As to expression, expressed in pineal gland and retina.

It catalyses the reaction N-acetylserotonin + S-adenosyl-L-methionine = melatonin + S-adenosyl-L-homocysteine + H(+). It participates in aromatic compound metabolism; melatonin biosynthesis; melatonin from serotonin: step 1/2. Its function is as follows. Catalyzes the transfer of a methyl group onto N-acetylserotonin, producing melatonin (N-acetyl-5-methoxytryptamine). The polypeptide is Acetylserotonin O-methyltransferase (ASMT) (Gallus gallus (Chicken)).